A 288-amino-acid chain; its full sequence is Protein shisa-2 (288 aa).

An N-terminal signal peptide occupies residues 1-23 (MWLEGSPLAVLAAVSFLLSVLAA). The Extracellular segment spans residues 24–110 (AQGSGEYCHG…DSTAVPIYVP (87 aa)). The chain crosses the membrane as a helical span at residues 111–131 (FLIVGSVFVAFIIVGSLVAIC). Residues 132–288 (CCRCLRPKQE…EQMMYPAVTV (157 aa)) are Cytoplasmic-facing. Residues 161–188 (SSASTSRGSSSRQSSTAASSSSSANSGA) are compositionally biased toward low complexity. The interval 161 to 198 (SSASTSRGSSSRQSSTAASSSSSANSGARPPPTRSQTN) is disordered.

It belongs to the shisa family. In terms of assembly, interacts with fzd8 and fgfr1.

The protein resides in the endoplasmic reticulum membrane. Functionally, plays an essential role in the maturation of presomitic mesoderm cells by individual attenuation of both fgf and wnt signaling. Inhibits both wnt and fgf signaling through the regulation of protein maturation and cell surface transportation of their receptors within the endoplasmic reticulum. This chain is Protein shisa-2 (shisa2), found in Xenopus laevis (African clawed frog).